Reading from the N-terminus, the 896-residue chain is DNA double-strand break repair Rad50 ATPase (896 aa).

Residues 32 to 38 and Q137 contribute to the ATP site; that span reads NGAGKSS. Coiled-coil stretches lie at residues 200-274, 412-505, 580-611, 636-669, and 702-731; these read RRYQ…KLQE, EEIR…LISM, IGDI…ESEF, IKLA…IQKR, and RSKV…RMKK. The Zinc-hook domain maps to 411–507; sequence YEEIRRDIDE…KKRQLISMES (97 aa). Zn(2+)-binding residues include C455 and C458.

Belongs to the SMC family. RAD50 subfamily. Homodimer. Forms a heterotetramer composed of two Mre11 subunits and two Rad50 subunits. Zn(2+) is required as a cofactor.

In terms of biological role, part of the Rad50/Mre11 complex, which is involved in the early steps of DNA double-strand break (DSB) repair. The complex may facilitate opening of the processed DNA ends to aid in the recruitment of HerA and NurA. Rad50 controls the balance between DNA end bridging and DNA resection via ATP-dependent structural rearrangements of the Rad50/Mre11 complex. The polypeptide is DNA double-strand break repair Rad50 ATPase (Thermoplasma acidophilum (strain ATCC 25905 / DSM 1728 / JCM 9062 / NBRC 15155 / AMRC-C165)).